Consider the following 188-residue polypeptide: Peptidyl-prolyl cis-trans isomerase (188 aa).

The first 20 residues, 1 to 20 (MLKRVAIVLGGLLISAHALA), serve as a signal peptide directing secretion. One can recognise a PPIase cyclophilin-type domain in the interval 21–181 (NTMVEMKTNL…QPVKIISVQI (161 aa)).

Belongs to the cyclophilin-type PPIase family.

The protein localises to the periplasm. It catalyses the reaction [protein]-peptidylproline (omega=180) = [protein]-peptidylproline (omega=0). Its function is as follows. PPIases accelerate the folding of proteins. It catalyzes the cis-trans isomerization of proline imidic peptide bonds in oligopeptides. This protein is not essential for growth. Presumably plays a role in signal transduction. This chain is Peptidyl-prolyl cis-trans isomerase (rotA), found in Acinetobacter baylyi (strain ATCC 33305 / BD413 / ADP1).